The primary structure comprises 548 residues: Probable malate:quinone oxidoreductase (548 aa).

Positions 521 to 548 (DKPQAADSTPKPQLKPQPVQKEVADIAL) are disordered. The span at 530–541 (PKPQLKPQPVQK) shows a compositional bias: low complexity.

It belongs to the MQO family. It depends on FAD as a cofactor.

It carries out the reaction (S)-malate + a quinone = a quinol + oxaloacetate. It participates in carbohydrate metabolism; tricarboxylic acid cycle; oxaloacetate from (S)-malate (quinone route): step 1/1. The polypeptide is Probable malate:quinone oxidoreductase (Escherichia coli O139:H28 (strain E24377A / ETEC)).